The primary structure comprises 465 residues: MPHHHSLPTSSADFGDFNSAPASSIQTSSLSQDDLLGSYDETIRHSPSVKSHPSPDPRASNLDLLFLDHNAEEHRRPEPTYSPRSRPTGVLPESVPHARSPRRLSTFSSSTSPTSPPSITDAGCDIIFHPFYDHMDVNATRAMQKMQGHGERGASKRSDKMQLRGQASHSRIAPSSSPPHSRLLDTLATTTKLASKWRSVITHPTSPNTADQTHNGQPKPQIRHAETSPMDITHDTPFASAEQIAGSYIPPTGAPGFTQASVLGMKHHGDGPFEPLTLIGRKDSTSNVLTPEDAIGLKACLPPRQRLTNQWTLLFSLDQHGASLSTLYRLIDIYSVSHQSSGNILVIRDGHGNRFGTYMNEPIVKREGTYYGSGESFLFKLTHSCQTIPYRWTGKNKYFALCEAGFMSFGGGAGAYGLILDSTFTHNSSATCPAYNNDILCELEPLKSQHAQSFQCLGLEVWSTL.

4 disordered regions span residues 1–61, 73–119, 144–183, and 202–223; these read MPHH…RASN, EHRR…PPSI, QKMQGHGERGASKRSDKMQLRGQASHSRIAPSSSPPHSRL, and THPTSPNTADQTHNGQPKPQIR. A compositionally biased stretch (polar residues) spans 20–32; that stretch reads APASSIQTSSLSQ. A compositionally biased stretch (low complexity) spans 103–113; the sequence is RLSTFSSSTSP. Positions 148-162 are enriched in basic and acidic residues; it reads GHGERGASKRSDKMQ. 2 stretches are compositionally biased toward polar residues: residues 165 to 179 and 202 to 218; these read GQASHSRIAPSSSPP and THPTSPNTADQTHNGQP. The TLDc domain occupies 287–465; sequence NVLTPEDAIG…CLGLEVWSTL (179 aa).

The protein belongs to the OXR1 family.

It localises to the mitochondrion. In terms of biological role, may be involved in protection from oxidative damage. The chain is Oxidation resistance protein 1 (OXR1) from Cryptococcus neoformans var. neoformans serotype D (strain JEC21 / ATCC MYA-565) (Filobasidiella neoformans).